The sequence spans 285 residues: 2,3,4,5-tetrahydropyridine-2,6-dicarboxylate N-succinyltransferase (285 aa).

R111 and D148 together coordinate substrate.

This sequence belongs to the transferase hexapeptide repeat family. Homotrimer.

The protein localises to the cytoplasm. The enzyme catalyses (S)-2,3,4,5-tetrahydrodipicolinate + succinyl-CoA + H2O = (S)-2-succinylamino-6-oxoheptanedioate + CoA. It participates in amino-acid biosynthesis; L-lysine biosynthesis via DAP pathway; LL-2,6-diaminopimelate from (S)-tetrahydrodipicolinate (succinylase route): step 1/3. This chain is 2,3,4,5-tetrahydropyridine-2,6-dicarboxylate N-succinyltransferase, found in Rhizobium rhizogenes (strain K84 / ATCC BAA-868) (Agrobacterium radiobacter).